A 673-amino-acid polypeptide reads, in one-letter code: Putative potassium transport system protein Kup 1 (673 aa).

The next 13 membrane-spanning stretches (helical) occupy residues glycine 14 to tyrosine 34, leucine 58 to leucine 78, tryptophan 101 to proline 121, leucine 147 to glycine 167, phenylalanine 175 to phenylalanine 195, glycine 196 to proline 216, alanine 220 to serine 240, valine 252 to leucine 272, leucine 294 to isoleucine 314, leucine 345 to phenylalanine 365, alanine 374 to leucine 394, valine 403 to serine 423, and phenylalanine 427 to isoleucine 447.

The protein belongs to the HAK/KUP transporter (TC 2.A.72) family.

The protein resides in the cell membrane. The catalysed reaction is K(+)(in) + H(+)(in) = K(+)(out) + H(+)(out). Transport of potassium into the cell. Likely operates as a K(+):H(+) symporter. The chain is Putative potassium transport system protein Kup 1 from Lactococcus lactis subsp. cremoris (strain MG1363).